The following is a 341-amino-acid chain: Casein kinase I isoform alpha (341 aa).

Residues 16-284 enclose the Protein kinase domain; that stretch reads YKLIRKIGSG…YLRQLFRILF (269 aa). Residues 22–30 and K45 contribute to the ATP site; that span reads IGSGSFGDI. D135 (proton acceptor) is an active-site residue. A compositionally biased stretch (polar residues) spans 306–320; it reads QSQSSGVPGTNTTTQ. A disordered region spans residues 306–341; the sequence is QSQSSGVPGTNTTTQGATVPSAGVPAGVAPGGTTPQ. Low complexity predominate over residues 321-341; the sequence is GATVPSAGVPAGVAPGGTTPQ.

Belongs to the protein kinase superfamily. CK1 Ser/Thr protein kinase family. Casein kinase I subfamily.

It carries out the reaction L-seryl-[protein] + ATP = O-phospho-L-seryl-[protein] + ADP + H(+). The enzyme catalyses L-threonyl-[protein] + ATP = O-phospho-L-threonyl-[protein] + ADP + H(+). The sequence is that of Casein kinase I isoform alpha (kin-19) from Caenorhabditis elegans.